A 1378-amino-acid polypeptide reads, in one-letter code: F-box protein At3g54460 (1378 aa).

The span at 65 to 96 (GDHDVENSGTIEDGRLETPQKRRKCVEGESSG) shows a compositional bias: basic and acidic residues. The interval 65–113 (GDHDVENSGTIEDGRLETPQKRRKCVEGESSGKRKTPKSKRRVLSGSKE) is disordered. The segment covering 97–107 (KRKTPKSKRRV) has biased composition (basic residues). In terms of domain architecture, F-box spans 282-328 (VSGVWDLSDDVLISILMKLDTKDLFSIAAVCRLFRSLTSLIVPCMNL). A CW-type zinc finger spans residues 571–622 (DVESDIWMQCDSCSKWRRIIDEGVSVTGSAWFCSNNNDPAYQSCNDPEELWD). Residues Cys-580, Cys-583, Cys-603, and Cys-614 each coordinate Zn(2+). The region spanning 720 to 885 (KWFYPKFLEN…LSHIQPLLKF (166 aa)) is the Helicase ATP-binding domain. 733–740 (DVPALKVA) provides a ligand contact to ATP. The DEAH box signature appears at 834 to 837 (DEGH). A Helicase C-terminal domain is found at 1185-1324 (DCGSQMVFVD…DAEKSDRLLS (140 aa)).

The protein belongs to the helicase family.

This is F-box protein At3g54460 from Arabidopsis thaliana (Mouse-ear cress).